The primary structure comprises 205 residues: Holliday junction branch migration complex subunit RuvA (205 aa).

Positions 1–64 (MIAHLRGELV…EDALTLYGFL (64 aa)) are domain I. The tract at residues 65 to 143 (TQAEYDLFEL…AVPAGGGGVP (79 aa)) is domain II. The flexible linker stretch occupies residues 144–153 (DGLPVAVAPA). A domain III region spans residues 153–205 (AGDAWAEASEALIALGYSRGEAAAALARVRAEAGEAPSVETLVRLALKQLYRG).

It belongs to the RuvA family. Homotetramer. Forms an RuvA(8)-RuvB(12)-Holliday junction (HJ) complex. HJ DNA is sandwiched between 2 RuvA tetramers; dsDNA enters through RuvA and exits via RuvB. An RuvB hexamer assembles on each DNA strand where it exits the tetramer. Each RuvB hexamer is contacted by two RuvA subunits (via domain III) on 2 adjacent RuvB subunits; this complex drives branch migration. In the full resolvosome a probable DNA-RuvA(4)-RuvB(12)-RuvC(2) complex forms which resolves the HJ.

It is found in the cytoplasm. Its function is as follows. The RuvA-RuvB-RuvC complex processes Holliday junction (HJ) DNA during genetic recombination and DNA repair, while the RuvA-RuvB complex plays an important role in the rescue of blocked DNA replication forks via replication fork reversal (RFR). RuvA specifically binds to HJ cruciform DNA, conferring on it an open structure. The RuvB hexamer acts as an ATP-dependent pump, pulling dsDNA into and through the RuvAB complex. HJ branch migration allows RuvC to scan DNA until it finds its consensus sequence, where it cleaves and resolves the cruciform DNA. The protein is Holliday junction branch migration complex subunit RuvA of Symbiobacterium thermophilum (strain DSM 24528 / JCM 14929 / IAM 14863 / T).